The following is a 249-amino-acid chain: Sugar fermentation stimulation protein homolog (249 aa).

This sequence belongs to the SfsA family.

The sequence is that of Sugar fermentation stimulation protein homolog from Synechococcus sp. (strain CC9902).